A 540-amino-acid chain; its full sequence is Chaperonin GroEL (540 aa).

ATP contacts are provided by residues 29–32, 86–90, Gly-413, 477–479, and Asp-493; these read TIGP, DGTTT, and NAA.

It belongs to the chaperonin (HSP60) family. Forms a cylinder of 14 subunits composed of two heptameric rings stacked back-to-back. Interacts with the co-chaperonin GroES.

It is found in the cytoplasm. It catalyses the reaction ATP + H2O + a folded polypeptide = ADP + phosphate + an unfolded polypeptide.. Its function is as follows. Together with its co-chaperonin GroES, plays an essential role in assisting protein folding. The GroEL-GroES system forms a nano-cage that allows encapsulation of the non-native substrate proteins and provides a physical environment optimized to promote and accelerate protein folding. The chain is Chaperonin GroEL from Lactobacillus helveticus (strain DPC 4571).